A 595-amino-acid chain; its full sequence is Solute carrier family 13 member 1 (595 aa).

Helical transmembrane passes span 13-33, 41-61, 77-97, 108-128, and 131-151; these read FLFV…LHTK, LFVV…TALL, VASA…CLAT, IALK…LGFM, and TAFL…MPIA. Residues asparagine 174 and asparagine 207 are each glycosylated (N-linked (GlcNAc...) asparagine). 8 consecutive transmembrane segments (helical) span residues 239 to 259, 290 to 310, 348 to 368, 381 to 401, 464 to 484, 491 to 511, 512 to 532, and 554 to 574; these read LTCL…ITGT, PAAL…FLGF, IVTL…DPGF, GFAT…LIPA, PLGS…VTSL, PATI…IHVN, PLYI…LPVA, and GLGV…TWIV. N-linked (GlcNAc...) asparagine glycosylation is present at asparagine 591.

Belongs to the SLC13A/DASS transporter (TC 2.A.47) family. NADC subfamily. In terms of tissue distribution, highly expressed in kidney; not detectable in the other tissues tested.

The protein localises to the apical cell membrane. The catalysed reaction is sulfate(out) + 3 Na(+)(out) = sulfate(in) + 3 Na(+)(in). The enzyme catalyses selenate(out) + 3 Na(+)(out) = selenate(in) + 3 Na(+)(in). It catalyses the reaction thiosulfate(out) + 3 Na(+)(out) = thiosulfate(in) + 3 Na(+)(in). Inhibited by thiosulfate, selenate, molybdate, tungstate, citrate and succinate. Its function is as follows. Sodium:sulfate symporter that mediates sulfate reabsorption in the kidney and small intestine. Can also mediate the transport of selenate and thiosulfate. The polypeptide is Solute carrier family 13 member 1 (SLC13A1) (Homo sapiens (Human)).